Consider the following 249-residue polypeptide: MRDVKYVDAHCHIEDKAFNKNRDEVIERAKKEDVIIVTSGASLGGCLRALELRKKYNIYLTLGYHPSRVKADDKVIEKVYNLIKNNEYEILAIGEIGMDIKDENYKRQEEIFKKFLSLAEELNKPIVVHARGFERKIFDIAKDKVDIMFHCYSGDVELAKEIGKEGHLISISTLVCFSEHHKKLVESLDLEYLTTETDSPYLSPIKGTKNEPKNVKLVIEEIAKIKEMEVEEVKDVIYKNTCKFFKRRL.

A divalent metal cation is bound by residues histidine 10, histidine 12, glutamate 95, histidine 129, histidine 150, and aspartate 198.

The protein belongs to the metallo-dependent hydrolases superfamily. TatD-type hydrolase family. Requires a divalent metal cation as cofactor.

This is an uncharacterized protein from Methanocaldococcus jannaschii (strain ATCC 43067 / DSM 2661 / JAL-1 / JCM 10045 / NBRC 100440) (Methanococcus jannaschii).